Here is a 105-residue protein sequence, read N- to C-terminus: Large ribosomal subunit protein bL21 (105 aa).

This sequence belongs to the bacterial ribosomal protein bL21 family. Part of the 50S ribosomal subunit. Contacts protein L20.

Its function is as follows. This protein binds to 23S rRNA in the presence of protein L20. The chain is Large ribosomal subunit protein bL21 from Methylobacterium nodulans (strain LMG 21967 / CNCM I-2342 / ORS 2060).